The primary structure comprises 273 residues: Large ribosomal subunit protein uL2 (273 aa).

2 disordered regions span residues 28-53 (KPFA…TTRH) and 221-273 (RGTA…RRSK). The segment covering 39 to 48 (KSGGRNNNGR) has biased composition (low complexity). K242 bears the N6-acetyllysine mark.

Belongs to the universal ribosomal protein uL2 family. In terms of assembly, part of the 50S ribosomal subunit. Forms a bridge to the 30S subunit in the 70S ribosome.

Functionally, one of the primary rRNA binding proteins. Required for association of the 30S and 50S subunits to form the 70S ribosome, for tRNA binding and peptide bond formation. It has been suggested to have peptidyltransferase activity; this is somewhat controversial. Makes several contacts with the 16S rRNA in the 70S ribosome. This Shigella dysenteriae serotype 1 (strain Sd197) protein is Large ribosomal subunit protein uL2.